We begin with the raw amino-acid sequence, 315 residues long: Probable cell division protein WhiA (315 aa).

Positions 280-313 form a DNA-binding region, H-T-H motif; it reads SLKELGDLLDPPLSKSGVAYRMRKLEESVKEILQ.

The protein belongs to the WhiA family.

Functionally, involved in cell division and chromosome segregation. The sequence is that of Probable cell division protein WhiA from Syntrophomonas wolfei subsp. wolfei (strain DSM 2245B / Goettingen).